The chain runs to 207 residues: GTP-binding protein RHO1 (207 aa).

Gly18–Thr25 provides a ligand contact to GTP. The short motif at Tyr40–Tyr48 is the Effector region element. Residues Asp65–Gln69 and Cys123–Asp126 each bind GTP. The segment at Gly187–Leu207 is disordered. The span at Gly190–Leu207 shows a compositional bias: basic residues. Cys204 carries the post-translational modification Cysteine methyl ester. Cys204 carries the S-geranylgeranyl cysteine lipid modification. Positions Val205–Leu207 are cleaved as a propeptide — removed in mature form.

The protein belongs to the small GTPase superfamily. Rho family.

It localises to the cell membrane. Functionally, involved in the regulation of actin polarization. Rho proteins are required for distinct steps during polarized hyphal growth of A.gossypii. The protein is GTP-binding protein RHO1 (RHO1) of Eremothecium gossypii (strain ATCC 10895 / CBS 109.51 / FGSC 9923 / NRRL Y-1056) (Yeast).